The following is a 396-amino-acid chain: Protein PIN-LIKES 5 (396 aa).

Over 1–5 the chain is Lumenal; sequence MGFWS. The chain crosses the membrane as a helical span at residues 6–26; the sequence is LLEVASMPVIQVLFMSLVGAF. Residues 27 to 45 are Cytoplasmic-facing; the sequence is MASDRCKLFPVEARNSMNK. A helical membrane pass occupies residues 46–66; that stretch reads VVFVLFAPALMFANLAQTVTL. Residues 67–73 are Lumenal-facing; that stretch reads EDIISWW. Residues 74–94 traverse the membrane as a helical segment; that stretch reads FMPVNMGLTFLIGGLLGWLVV. Topologically, residues 95 to 106 are cytoplasmic; it reads KILKPPPYLEGL. A helical transmembrane segment spans residues 107 to 127; sequence IVATCSAGNMGNLPIILVPAI. Residues 128–144 are Lumenal-facing; it reads CDEDKSPFGNRSVCRTV. The chain crosses the membrane as a helical span at residues 145–165; the sequence is GLSYASFSMALGGFYIWTYTF. Over 166–229 the chain is Cytoplasmic; sequence RLIKGSAMKV…WRKGVDFLHE (64 aa). A helical transmembrane segment spans residues 230–250; sequence ILEELLAPPTLGAIIGFIFGA. Over 251–273 the chain is Lumenal; that stretch reads VRWLRNLIIGDDAPLRIVQSTAK. Residues 274–294 traverse the membrane as a helical segment; it reads LLGDGTIPCMTIILGGNLIQG. The Cytoplasmic portion of the chain corresponds to 295–312; the sequence is LRSSAVKPMVVLGIVCVR. A helical transmembrane segment spans residues 313–333; it reads YIAMPIIGIGIVLTAANLGFL. Residues 334-337 are Lumenal-facing; sequence PADP. A helical membrane pass occupies residues 338 to 358; that stretch reads LFQYVLMLQFTLPPAMNIGTM. The Cytoplasmic segment spans residues 359-370; the sequence is TQLYNVAQDECS. A helical membrane pass occupies residues 371–391; that stretch reads VLMLWTYLVAILALTVWSTIF. Over 392 to 396 the chain is Lumenal; the sequence is LHLLV.

The protein belongs to the auxin efflux carrier (TC 2.A.69.2) family. As to expression, expressed in seedlings, cauline leaves and flowers.

Its subcellular location is the endoplasmic reticulum membrane. Functionally, involved in cellular auxin homeostasis by regulating auxin metabolism. Regulates intracellular auxin accumulation at the endoplasmic reticulum and thus auxin availability for nuclear auxin signaling. The polypeptide is Protein PIN-LIKES 5 (Arabidopsis thaliana (Mouse-ear cress)).